The sequence spans 214 residues: Triosephosphate isomerase (214 aa).

Position 6–8 (6–8 (NLK)) interacts with substrate. Histidine 85 functions as the Electrophile in the catalytic mechanism. Glutamate 133 serves as the catalytic Proton acceptor. Substrate contacts are provided by residues isoleucine 138, glycine 173, and 194 to 195 (AS).

This sequence belongs to the triosephosphate isomerase family. As to quaternary structure, homotetramer; dimer of dimers.

The protein localises to the cytoplasm. The enzyme catalyses D-glyceraldehyde 3-phosphate = dihydroxyacetone phosphate. It participates in carbohydrate biosynthesis; gluconeogenesis. Its pathway is carbohydrate degradation; glycolysis; D-glyceraldehyde 3-phosphate from glycerone phosphate: step 1/1. Involved in the gluconeogenesis. Catalyzes stereospecifically the conversion of dihydroxyacetone phosphate (DHAP) to D-glyceraldehyde-3-phosphate (G3P). In Halobacterium salinarum (strain ATCC 700922 / JCM 11081 / NRC-1) (Halobacterium halobium), this protein is Triosephosphate isomerase.